We begin with the raw amino-acid sequence, 156 residues long: Small ribosomal subunit protein uS7 (156 aa).

Belongs to the universal ribosomal protein uS7 family. Part of the 30S ribosomal subunit. Contacts proteins S9 and S11.

Functionally, one of the primary rRNA binding proteins, it binds directly to 16S rRNA where it nucleates assembly of the head domain of the 30S subunit. Is located at the subunit interface close to the decoding center, probably blocks exit of the E-site tRNA. The sequence is that of Small ribosomal subunit protein uS7 from Allorhizobium ampelinum (strain ATCC BAA-846 / DSM 112012 / S4) (Agrobacterium vitis (strain S4)).